The following is a 120-amino-acid chain: Small ribosomal subunit protein uS17m (120 aa).

The transit peptide at 1–20 directs the protein to the mitochondrion; it reads MSIVRSSVHAKWVVGKVIGT.

The protein belongs to the universal ribosomal protein uS17 family. As to quaternary structure, component of the mitochondrial ribosome small subunit (28S) which comprises a 12S rRNA and about 30 distinct proteins.

It is found in the mitochondrion. This Mus musculus (Mouse) protein is Small ribosomal subunit protein uS17m (Mrps17).